A 128-amino-acid chain; its full sequence is Large ribosomal subunit protein bL17 (128 aa).

The protein belongs to the bacterial ribosomal protein bL17 family. Part of the 50S ribosomal subunit. Contacts protein L32.

The sequence is that of Large ribosomal subunit protein bL17 from Pseudomonas syringae pv. tomato (strain ATCC BAA-871 / DC3000).